Here is a 96-residue protein sequence, read N- to C-terminus: Small ribosomal subunit protein bS18 (96 aa).

The segment at 1–20 is disordered; the sequence is MSHGGKRRSGDGGSEGSSYS.

This sequence belongs to the bacterial ribosomal protein bS18 family. As to quaternary structure, part of the 30S ribosomal subunit. Forms a tight heterodimer with protein bS6.

In terms of biological role, binds as a heterodimer with protein bS6 to the central domain of the 16S rRNA, where it helps stabilize the platform of the 30S subunit. The sequence is that of Small ribosomal subunit protein bS18 from Anaplasma phagocytophilum (strain HZ).